The chain runs to 127 residues: MEEITMALNIENIIAEIKEASILELNDLVKAIEEEFGVTAAAPVAAAADGAADAGAAKDSFDVELTSAGDKKVGVIKVVREITGEGLKEAKAIVDGAPSVIKEGVAAAEAEEIKAKLEEAGASVTLK.

It belongs to the bacterial ribosomal protein bL12 family. In terms of assembly, homodimer. Part of the ribosomal stalk of the 50S ribosomal subunit. Forms a multimeric L10(L12)X complex, where L10 forms an elongated spine to which 2 to 4 L12 dimers bind in a sequential fashion. Binds GTP-bound translation factors.

Its function is as follows. Forms part of the ribosomal stalk which helps the ribosome interact with GTP-bound translation factors. Is thus essential for accurate translation. In Streptococcus thermophilus (strain CNRZ 1066), this protein is Large ribosomal subunit protein bL12.